The sequence spans 377 residues: Flagellin (377 aa).

Belongs to the bacterial flagellin family.

The protein localises to the secreted. The protein resides in the bacterial flagellum. Flagellin is the subunit protein which polymerizes to form the filaments of bacterial flagella. This Clostridium tyrobutyricum protein is Flagellin (fla).